A 310-amino-acid chain; its full sequence is Putative HTH-type transcriptional regulatory protein SSO0942 (310 aa).

The region spanning 125–180 is the HTH cro/C1-type domain; the sequence is LKHKREEMGYSIGDVAKFLGVSRKAIYDYEKGDSDVSLEVAEKLIDLFGDDIIGDV. A DNA-binding region (H-T-H motif) is located at residues 136-155; sequence IGDVAKFLGVSRKAIYDYEK.

This chain is Putative HTH-type transcriptional regulatory protein SSO0942, found in Saccharolobus solfataricus (strain ATCC 35092 / DSM 1617 / JCM 11322 / P2) (Sulfolobus solfataricus).